Reading from the N-terminus, the 214-residue chain is Metalloproteinase inhibitor 3 (214 aa).

The signal sequence occupies residues 1–26 (MSVCALTLILGCFLLFLGDISKPAEG). C27 lines the Zn(2+) pocket. Involved in metalloproteinase-binding regions lie at residues 27–30 (CTCA) and 91–92 (ES). 6 disulfide bridges follow: C27/C94, C29/C121, C39/C146, C148/C195, C153/C158, and C166/C187. The 120-residue stretch at 27-146 (CTCAPSHPQD…GLNHRYPLGC (120 aa)) folds into the NTR domain.

The protein belongs to the protease inhibitor I35 (TIMP) family.

Its subcellular location is the secreted. The protein localises to the extracellular space. It is found in the extracellular matrix. Complexes with metalloproteinases (such as collagenases) and irreversibly inactivates them by binding to their catalytic zinc cofactor. May form part of a tissue-specific acute response to remodeling stimuli. This Xenopus laevis (African clawed frog) protein is Metalloproteinase inhibitor 3 (timp3).